The following is a 267-amino-acid chain: Octanoyltransferase (267 aa).

The BPL/LPL catalytic domain occupies 77 to 265; the sequence is GTASELVWLV…AFESVFGPRQ (189 aa). Residues 116–123, 196–198, and 209–211 contribute to the substrate site; these read RGGEYTYH, AIG, and GIA. Cys227 (acyl-thioester intermediate) is an active-site residue.

It belongs to the LipB family.

The protein resides in the cytoplasm. It carries out the reaction octanoyl-[ACP] + L-lysyl-[protein] = N(6)-octanoyl-L-lysyl-[protein] + holo-[ACP] + H(+). It participates in protein modification; protein lipoylation via endogenous pathway; protein N(6)-(lipoyl)lysine from octanoyl-[acyl-carrier-protein]: step 1/2. Functionally, catalyzes the transfer of endogenously produced octanoic acid from octanoyl-acyl-carrier-protein onto the lipoyl domains of lipoate-dependent enzymes. Lipoyl-ACP can also act as a substrate although octanoyl-ACP is likely to be the physiological substrate. This is Octanoyltransferase from Brucella suis biovar 1 (strain 1330).